Consider the following 3413-residue polypeptide: Protein pecanex (3413 aa).

2 helical membrane-spanning segments follow: residues 33-53 and 57-77; these read VVHLYLWLYLLCSPFVAYLYF and WLTWCLYCVITSLTILMVKLA. A glycan (N-linked (GlcNAc...) asparagine) is linked at Asn164. The span at 182-195 shows a compositional bias: low complexity; that stretch reads GSQQDQQSLAGSAS. 2 disordered regions span residues 182 to 213 and 235 to 314; these read GSQQDQQSLAGSASVSKSIRSTGPGGNSSTSA and GSSA…ENKL. The span at 196–213 shows a compositional bias: polar residues; the sequence is VSKSIRSTGPGGNSSTSA. Asn208 is a glycosylation site (N-linked (GlcNAc...) asparagine). Over residues 302–312 the composition is skewed to low complexity; the sequence is AAAAANSNAEN. N-linked (GlcNAc...) asparagine glycosylation occurs at Asn317. 4 disordered regions span residues 327 to 363, 379 to 403, 540 to 609, and 625 to 651; these read PSFLHSQPTNKARGQTNPRQHFITSAPSTGIGGGDAP, LVNPGRSSRLQRHRSSETHDERLKH, PGTG…GTGG, and PSVSNLSPHPNSVEAISGQQQMRNPLP. Over residues 330 to 354 the composition is skewed to polar residues; that stretch reads LHSQPTNKARGQTNPRQHFITSAPS. Basic and acidic residues predominate over residues 392–402; sequence RSSETHDERLK. The segment covering 541-559 has biased composition (gly residues); sequence GTGGSVTGGGGAAGGGGSA. Residues Asn569 and Asn581 are each glycosylated (N-linked (GlcNAc...) asparagine). A compositionally biased stretch (polar residues) spans 569–582; sequence NATSYKHGSSQSNK. Gly residues predominate over residues 599 to 609; it reads GTSGGAGGTGG. Over residues 625–634 the composition is skewed to polar residues; that stretch reads PSVSNLSPHP. An N-linked (GlcNAc...) asparagine glycan is attached at Asn685. A compositionally biased stretch (basic and acidic residues) spans 720 to 730; sequence EKTAHEEHGDD. Disordered stretches follow at residues 720 to 745, 816 to 873, 886 to 921, and 1002 to 1021; these read EKTAHEEHGDDCLGIGQGNADDDDEV, HHHS…NRQP, RQELSHQSGAVIPAPNPPVPIRSEADSGCPSSDCEQ, and KQTKQASRNSSSSNSTHSIS. Basic residues predominate over residues 816-826; the sequence is HHHSHLHHHKA. Over residues 828–846 the composition is skewed to low complexity; it reads SVEGAGPSGGSVAVGVSAG. Acidic residues predominate over residues 847–856; it reads NDDEDEETED. Asn857 is a glycosylation site (N-linked (GlcNAc...) asparagine). The segment covering 1008-1021 has biased composition (low complexity); the sequence is SRNSSSSNSTHSIS. Residues Asn1010, Asn1015, Asn1069, and Asn1199 are each glycosylated (N-linked (GlcNAc...) asparagine). Transmembrane regions (helical) follow at residues 1315 to 1335 and 1343 to 1363; these read MHVLLASLLCTLVACLGAAIL and LCALLFCAVIAGAQYSLVKSV. Asn1375 carries an N-linked (GlcNAc...) asparagine glycan. Helical transmembrane passes span 1376–1396, 1423–1443, 1474–1494, and 1504–1524; these read KTVAYSRAIYFCLAGGMLLLL, VVALLLQALYILLLCFPIIFS, LLGSFLCVVRSVLAVMLLYGP, and GTQYILFSIFCAMLVPLGYHL. An N-linked (GlcNAc...) asparagine glycan is attached at Asn1572. Disordered stretches follow at residues 1577-1675, 1722-1744, and 1760-1813; these read QLTT…TGEP, DKISSSSATNPGDMSTLTAGAGT, and AEAE…LPDP. Composition is skewed to basic and acidic residues over residues 1587–1598 and 1607–1620; these read RQTDVKTEHEQI and TVNEEHHEKDHGAD. The segment covering 1639–1666 has biased composition (low complexity); the sequence is KTSSLGSSQQTLGKTISSSKRAITASSS. Residues 1725-1738 are compositionally biased toward polar residues; it reads SSSSATNPGDMSTL. A run of 5 repeats spans residues 1776–1777, 1778–1779, 1780–1781, 1782–1783, and 1784–1785. Residues 1776-1785 are 5 X 2 AA tandem repeats of G-T; that stretch reads GTGTGTGTGT. 2 N-linked (GlcNAc...) asparagine glycosylation sites follow: Asn1791 and Asn1804. Over residues 1799–1808 the composition is skewed to low complexity; the sequence is GNTNSNGTGN. The next 5 helical transmembrane spans lie at 1830–1850, 1856–1876, 1914–1934, 1940–1960, and 1976–1996; these read LVVMTLLAVSVLGLHCSTVFT, LNVVLYSFIGVLGLLLHYIVP, LYIYLSVLERNVLFPLLAISS, QLIVAKFGLPWGTLIVAICAL, and IIIFTVLLFRIDFAMATETFI. The tract at residues 2344-2463 is disordered; sequence SMGGAPPAQA…HSFANISRQT (120 aa). Residues 2346-2370 are compositionally biased toward low complexity; sequence GGAPPAQAPAAAGGASSAPATAGVA. N-linked (GlcNAc...) asparagine glycosylation is found at Asn2380 and Asn2387. Low complexity predominate over residues 2389–2411; that stretch reads SAHGGQAGPSSGQSKSQSQQQLR. A compositionally biased stretch (gly residues) spans 2437-2447; sequence GTGGVTGGGGD. Positions 2449-2463 are enriched in polar residues; that stretch reads QLSSSHSFANISRQT. Residues Asn2458, Asn2619, and Asn2717 are each glycosylated (N-linked (GlcNAc...) asparagine). 2 disordered regions span residues 2908–2997 and 3198–3242; these read LNRE…SSGS and ESST…GDDG. Over residues 2940-2956 the composition is skewed to basic and acidic residues; sequence RRPEVGSSRGRDHERRA. An N-linked (GlcNAc...) asparagine glycan is attached at Asn3246. The segment at 3295–3413 is disordered; sequence AEESKEKGTA…NGESEAGTTV (119 aa). The span at 3310–3323 shows a compositional bias: acidic residues; sequence EGEEGVGEMEIEPE. Residues 3364–3377 show a composition bias toward low complexity; that stretch reads TSSTSSAKSTSSPS. Over residues 3380–3406 the composition is skewed to acidic residues; sequence QEEEDAVDPEETPELASEESPSDENGE.

Belongs to the pecanex family.

The protein localises to the membrane. Functionally, involved in neurogenesis. The sequence is that of Protein pecanex (pcx) from Drosophila melanogaster (Fruit fly).